We begin with the raw amino-acid sequence, 252 residues long: Phosphoglycolate phosphatase (252 aa).

Asp-13 functions as the Nucleophile in the catalytic mechanism. Residues Asp-13, Asp-15, and Asp-192 each contribute to the Mg(2+) site.

This sequence belongs to the HAD-like hydrolase superfamily. CbbY/CbbZ/Gph/YieH family. Monomer. Mg(2+) serves as cofactor. Requires chloride as cofactor.

The enzyme catalyses 2-phosphoglycolate + H2O = glycolate + phosphate. The protein operates within organic acid metabolism; glycolate biosynthesis; glycolate from 2-phosphoglycolate: step 1/1. In terms of biological role, specifically catalyzes the dephosphorylation of 2-phosphoglycolate. Is involved in the dissimilation of the intracellular 2-phosphoglycolate formed during the DNA repair of 3'-phosphoglycolate ends, a major class of DNA lesions induced by oxidative stress. In Salmonella paratyphi A (strain ATCC 9150 / SARB42), this protein is Phosphoglycolate phosphatase.